Here is a 375-residue protein sequence, read N- to C-terminus: Protein arginine N-methyltransferase 6 (375 aa).

Positions 1–38 (MSQPKKRKLESGGGGEGGEGTEEEDGAEREAALERPRR) are disordered. A Phosphothreonine modification is found at Thr21. Basic and acidic residues predominate over residues 28 to 38 (EREAALERPRR). Arg29, Arg35, and Arg37 each carry asymmetric dimethylarginine; by autocatalysis. The SAM-dependent MTase PRMT-type domain maps to 44–374 (DQLYYECYSD…EEKTKDFAME (331 aa)). Positions 57, 66, 90, 112, and 141 each coordinate S-adenosyl-L-methionine. Residues Glu155 and Glu164 contribute to the active site.

Belongs to the class I-like SAM-binding methyltransferase superfamily. Protein arginine N-methyltransferase family. PRMT6 subfamily. Interacts with EPB41L3 and NCOA1. In terms of assembly, (Microbial infection) Interacts with (and methylates) HIV-1 Tat, Rev and Nucleocapsid protein p7 (NC). As to quaternary structure, (Microbial infection) Interacts with human cytomegalovirus protein UL69. Post-translationally, automethylation enhances its stability and antiretroviral activity. Highly expressed in kidney and testis.

The protein resides in the nucleus. It catalyses the reaction L-arginyl-[protein] + 2 S-adenosyl-L-methionine = N(omega),N(omega)-dimethyl-L-arginyl-[protein] + 2 S-adenosyl-L-homocysteine + 2 H(+). Its function is as follows. Arginine methyltransferase that can catalyze the formation of both omega-N monomethylarginine (MMA) and asymmetrical dimethylarginine (aDMA), with a strong preference for the formation of aDMA. Preferentially methylates arginyl residues present in a glycine and arginine-rich domain and displays preference for monomethylated substrates. Specifically mediates the asymmetric dimethylation of histone H3 'Arg-2' to form H3R2me2a. H3R2me2a represents a specific tag for epigenetic transcriptional repression and is mutually exclusive with methylation on histone H3 'Lys-4' (H3K4me2 and H3K4me3). Acts as a transcriptional repressor of various genes such as HOXA2, THBS1 and TP53. Repression of TP53 blocks cellular senescence. Also methylates histone H2A and H4 'Arg-3' (H2AR3me and H4R3me, respectively). Acts as a regulator of DNA base excision during DNA repair by mediating the methylation of DNA polymerase beta (POLB), leading to the stimulation of its polymerase activity by enhancing DNA binding and processivity. Methylates HMGA1. Regulates alternative splicing events. Acts as a transcriptional coactivator of a number of steroid hormone receptors including ESR1, ESR2, PGR and NR3C1. Promotes fasting-induced transcriptional activation of the gluconeogenic program through methylation of the CRTC2 transcription coactivator. May play a role in innate immunity against HIV-1 in case of infection by methylating and impairing the function of various HIV-1 proteins such as Tat, Rev and Nucleocapsid protein p7 (NC). Methylates GPS2, protecting GPS2 from ubiquitination and degradation. Methylates SIRT7, inhibiting SIRT7 histone deacetylase activity and promoting mitochondria biogenesis. This Homo sapiens (Human) protein is Protein arginine N-methyltransferase 6 (PRMT6).